Reading from the N-terminus, the 208-residue chain is LexA repressor (208 aa).

A DNA-binding region (H-T-H motif) is located at residues 29-49 (IREIGDSLNINSTSTVHNNIL). Residues Ser-131 and Lys-168 each act as for autocatalytic cleavage activity in the active site.

Belongs to the peptidase S24 family. As to quaternary structure, homodimer.

It catalyses the reaction Hydrolysis of Ala-|-Gly bond in repressor LexA.. Represses a number of genes involved in the response to DNA damage (SOS response), including recA and lexA. In the presence of single-stranded DNA, RecA interacts with LexA causing an autocatalytic cleavage which disrupts the DNA-binding part of LexA, leading to derepression of the SOS regulon and eventually DNA repair. The sequence is that of LexA repressor from Finegoldia magna (strain ATCC 29328 / DSM 20472 / WAL 2508) (Peptostreptococcus magnus).